The primary structure comprises 259 residues: Ribosomal RNA small subunit methyltransferase A (259 aa).

Asn-13, Thr-15, Gly-40, Glu-61, Asp-85, and Asn-105 together coordinate S-adenosyl-L-methionine.

The protein belongs to the class I-like SAM-binding methyltransferase superfamily. rRNA adenine N(6)-methyltransferase family. RsmA subfamily.

It localises to the cytoplasm. It carries out the reaction adenosine(1518)/adenosine(1519) in 16S rRNA + 4 S-adenosyl-L-methionine = N(6)-dimethyladenosine(1518)/N(6)-dimethyladenosine(1519) in 16S rRNA + 4 S-adenosyl-L-homocysteine + 4 H(+). Specifically dimethylates two adjacent adenosines (A1518 and A1519) in the loop of a conserved hairpin near the 3'-end of 16S rRNA in the 30S particle. May play a critical role in biogenesis of 30S subunits. The chain is Ribosomal RNA small subunit methyltransferase A from Mycoplasma genitalium (strain ATCC 33530 / DSM 19775 / NCTC 10195 / G37) (Mycoplasmoides genitalium).